Here is a 129-residue protein sequence, read N- to C-terminus: Replication initiation control protein YabA (129 aa).

The interval 52–71 (LSLTDEATPEPKAETEAEHG) is disordered. Positions 60–71 (PEPKAETEAEHG) are enriched in basic and acidic residues. The Zn(2+) site is built by His-103, Cys-105, Cys-119, and Cys-122.

It belongs to the YabA family. Homotetramer. Interacts with both DnaA and DnaN, acting as a bridge between these two proteins. Zn(2+) serves as cofactor.

The protein localises to the cytoplasm. It localises to the nucleoid. In terms of biological role, involved in control of chromosome replication initiation. Inhibits the cooperative binding of DnaA to the oriC region, thus negatively regulating initiation of chromosome replication. Inhibits the ability of DnaA-ATP to form a helix on DNA; does not disassemble preformed DnaA-DNA helices. Decreases the residence time of DnaA on the chromosome at its binding sites (oriC, replication forks and promoter-binding sites). Tethers DnaA to the replication machinery via the DNA polymerase beta sliding clamp subunit (dnaN). Associates with oriC and other DnaA targets on the chromosome in a DnaA-dependent manner. The sequence is that of Replication initiation control protein YabA from Listeria monocytogenes serotype 4a (strain HCC23).